The following is a 504-amino-acid chain: Cytochrome P450 3A16 (504 aa).

C443 lines the heme pocket.

The protein belongs to the cytochrome P450 family. It depends on heme as a cofactor.

Its subcellular location is the endoplasmic reticulum membrane. It is found in the microsome membrane. It catalyses the reaction an organic molecule + reduced [NADPH--hemoprotein reductase] + O2 = an alcohol + oxidized [NADPH--hemoprotein reductase] + H2O + H(+). Its function is as follows. Cytochromes P450 are a group of heme-thiolate monooxygenases. In liver microsomes, this enzyme is involved in an NADPH-dependent electron transport pathway. It oxidizes a variety of structurally unrelated compounds, including steroids, fatty acids, and xenobiotics. The sequence is that of Cytochrome P450 3A16 (Cyp3a16) from Mus musculus (Mouse).